Consider the following 311-residue polypeptide: Formimidoylglutamase (311 aa).

6 residues coordinate Mn(2+): histidine 130, aspartate 155, histidine 157, aspartate 159, cysteine 242, and aspartate 244.

The protein belongs to the arginase family. Mn(2+) is required as a cofactor.

It catalyses the reaction N-formimidoyl-L-glutamate + H2O = formamide + L-glutamate. Its pathway is amino-acid degradation; L-histidine degradation into L-glutamate; L-glutamate from N-formimidoyl-L-glutamate (hydrolase route): step 1/1. Functionally, catalyzes the conversion of N-formimidoyl-L-glutamate to L-glutamate and formamide. The polypeptide is Formimidoylglutamase (Staphylococcus aureus (strain bovine RF122 / ET3-1)).